We begin with the raw amino-acid sequence, 114 residues long: Malate dehydrogenase (114 aa).

D4 provides a ligand contact to NAD(+). Substrate is bound by residues R51 and R57. Residues N64 and 87–89 (ITN) contribute to the NAD(+) site. N89 is a substrate binding site.

Belongs to the LDH/MDH superfamily. MDH type 1 family. As to quaternary structure, homodimer.

The enzyme catalyses (S)-malate + NAD(+) = oxaloacetate + NADH + H(+). Its function is as follows. Catalyzes the reversible oxidation of malate to oxaloacetate. The sequence is that of Malate dehydrogenase (mdh) from Klebsiella pneumoniae subsp. rhinoscleromatis.